The primary structure comprises 250 residues: MTLSKITSIAGLLASASLVAGHGFVSGIVADGKYYGGYLVNQYPYMSNPPDTIAWSTTATDLGFVDGTGYQSPDIICHRDAKNGKLTATVAAGSQIEFQWTTWPESHHGPLITYLAPCNGDCATVDKTTLKFVKIAAQGLIDGSNPPGVWADDEMIANNNTATVTIPASYAPGNYVLRHEIIALHSAGNLNGAQNYPQCFNIQITGGGSAQGSGTAGTSLYKNTDPGIKFDIYSDLSGGYPIPGPALFNA.

A signal peptide spans 1–21 (MTLSKITSIAGLLASASLVAG). Histidine 22 and histidine 107 together coordinate Cu(2+). Histidine 22 bears the Methylhistidine mark. 2 cysteine pairs are disulfide-bonded: cysteine 77/cysteine 199 and cysteine 118/cysteine 122. N-linked (GlcNAc...) asparagine glycosylation occurs at asparagine 159. Residues histidine 185 and glutamine 194 each contribute to the O2 site. Tyrosine 196 provides a ligand contact to Cu(2+).

This sequence belongs to the polysaccharide monooxygenase AA9 family. Cu(2+) is required as a cofactor. Post-translationally, the catalytically essential N-terminal histidine His-22 is post-translationally modified by methylation to prevent protonation of the histidine side chain, and protect the critical active site of the enzyme from oxidative damage.

It is found in the secreted. The catalysed reaction is [(1-&gt;4)-beta-D-glucosyl]n+m + reduced acceptor + O2 = 4-dehydro-beta-D-glucosyl-[(1-&gt;4)-beta-D-glucosyl]n-1 + [(1-&gt;4)-beta-D-glucosyl]m + acceptor + H2O.. Lytic polysaccharide monooxygenase (LPMO) that depolymerizes crystalline and amorphous polysaccharides via the oxidation of scissile alpha- or beta-(1-4)-glycosidic bonds, yielding C1 and C4 oxidation products. Catalysis by LPMOs requires the reduction of the active-site copper from Cu(II) to Cu(I) by a reducing agent and H(2)O(2) or O(2) as a cosubstrate. Shows activity on phosphoric acid swollen cellulose, on NaOH pretreated soy spent flakes as well as on crystalline cellulose (Avicel). Does not have a positive effect on cel6A activity, but acts synergistically with endoglucanase egl7. The polypeptide is AA9 family lytic polysaccharide monooxygenase B (Aspergillus fumigatus (strain ATCC MYA-4609 / CBS 101355 / FGSC A1100 / Af293) (Neosartorya fumigata)).